The chain runs to 581 residues: NADH-quinone oxidoreductase subunit C/D (581 aa).

The segment at 1–172 (MSATDLVSEL…PLFNMTAALF (172 aa)) is NADH dehydrogenase I subunit C. An NADH dehydrogenase I subunit D region spans residues 196-581 (ELMILNYGPH…IDYVMSDVDR (386 aa)).

The protein in the N-terminal section; belongs to the complex I 30 kDa subunit family. It in the C-terminal section; belongs to the complex I 49 kDa subunit family. NDH-1 is composed of 13 different subunits. Subunits NuoB, CD, E, F, and G constitute the peripheral sector of the complex.

The protein resides in the cell inner membrane. The catalysed reaction is a quinone + NADH + 5 H(+)(in) = a quinol + NAD(+) + 4 H(+)(out). NDH-1 shuttles electrons from NADH, via FMN and iron-sulfur (Fe-S) centers, to quinones in the respiratory chain. The immediate electron acceptor for the enzyme in this species is believed to be ubiquinone. Couples the redox reaction to proton translocation (for every two electrons transferred, four hydrogen ions are translocated across the cytoplasmic membrane), and thus conserves the redox energy in a proton gradient. This is NADH-quinone oxidoreductase subunit C/D from Rhodopseudomonas palustris (strain HaA2).